We begin with the raw amino-acid sequence, 109 residues long: Large ribosomal subunit protein eL42 (109 aa).

A disordered region spans residues 23-53; sequence VSQYKKSKESTHAQGRRRYDMKQSGFGGQTK. The span at 28-43 shows a compositional bias: basic and acidic residues; that stretch reads KSKESTHAQGRRRYDM.

It belongs to the eukaryotic ribosomal protein eL42 family.

It is found in the cytoplasm. This Tetrahymena thermophila (strain SB210) protein is Large ribosomal subunit protein eL42 (RPL36A).